A 180-amino-acid chain; its full sequence is Transcriptional repressor NrdR (180 aa).

The segment at 3–34 (CPYCQNTSSRVLESRSTEAGQSIRRRRECLQC) is a zinc-finger region. An ATP-cone domain is found at 49 to 139 (ISVLKKDKSK…VYGEFKGITD (91 aa)). Positions 148-180 (QQEERESSSSPEWSDAGEEATVIEDSSQVMASS) are disordered. Polar residues predominate over residues 171-180 (EDSSQVMASS).

This sequence belongs to the NrdR family. The cofactor is Zn(2+).

Its function is as follows. Negatively regulates transcription of bacterial ribonucleotide reductase nrd genes and operons by binding to NrdR-boxes. The protein is Transcriptional repressor NrdR of Gloeothece citriformis (strain PCC 7424) (Cyanothece sp. (strain PCC 7424)).